Here is a 103-residue protein sequence, read N- to C-terminus: Small ribosomal subunit protein uS10 (103 aa).

The protein belongs to the universal ribosomal protein uS10 family. As to quaternary structure, part of the 30S ribosomal subunit.

Functionally, involved in the binding of tRNA to the ribosomes. The protein is Small ribosomal subunit protein uS10 of Buchnera aphidicola subsp. Acyrthosiphon pisum (strain 5A).